A 734-amino-acid polypeptide reads, in one-letter code: Polyribonucleotide nucleotidyltransferase (734 aa).

Asp497 and Asp503 together coordinate Mg(2+). A KH domain is found at 564-623 (PRIIHITIDPDKIRDVIGPGGKVIKKIVEETGAEIDIEDDGRVFIAAVDQEKGRKAQEII). An S1 motif domain is found at 633–707 (GEIYTGRVTR…SQGRLKLSKK (75 aa)). Positions 700–734 (GRLKLSKKEATPPPESTAMKEGRAHRPSRRRESAR) are disordered. Residues 717–734 (AMKEGRAHRPSRRRESAR) show a composition bias toward basic and acidic residues.

This sequence belongs to the polyribonucleotide nucleotidyltransferase family. It depends on Mg(2+) as a cofactor.

It is found in the cytoplasm. The enzyme catalyses RNA(n+1) + phosphate = RNA(n) + a ribonucleoside 5'-diphosphate. In terms of biological role, involved in mRNA degradation. Catalyzes the phosphorolysis of single-stranded polyribonucleotides processively in the 3'- to 5'-direction. This Pelotomaculum thermopropionicum (strain DSM 13744 / JCM 10971 / SI) protein is Polyribonucleotide nucleotidyltransferase.